The sequence spans 648 residues: Threonine--tRNA ligase (648 aa).

Residues 1–63 (MAQISLTFPD…TQDAAIAIHT (63 aa)) form the TGS domain. Residues 247 to 544 (DHRKLGREMN…LIEEHAGKLP (298 aa)) are catalytic. Zn(2+)-binding residues include Cys344, His395, and His521.

The protein belongs to the class-II aminoacyl-tRNA synthetase family. As to quaternary structure, homodimer. Zn(2+) is required as a cofactor.

Its subcellular location is the cytoplasm. It catalyses the reaction tRNA(Thr) + L-threonine + ATP = L-threonyl-tRNA(Thr) + AMP + diphosphate + H(+). Catalyzes the attachment of threonine to tRNA(Thr) in a two-step reaction: L-threonine is first activated by ATP to form Thr-AMP and then transferred to the acceptor end of tRNA(Thr). Also edits incorrectly charged L-seryl-tRNA(Thr). The protein is Threonine--tRNA ligase of Ruegeria sp. (strain TM1040) (Silicibacter sp.).